Here is a 294-residue protein sequence, read N- to C-terminus: N-acetylmuramic acid 6-phosphate etherase (294 aa).

One can recognise an SIS domain in the interval 54 to 217; the sequence is VIKSFEEEGR…STASMIGVGK (164 aa). The Proton donor role is filled by Glu-82. The active site involves Glu-113.

It belongs to the GCKR-like family. MurNAc-6-P etherase subfamily. As to quaternary structure, homodimer.

It carries out the reaction N-acetyl-D-muramate 6-phosphate + H2O = N-acetyl-D-glucosamine 6-phosphate + (R)-lactate. It participates in amino-sugar metabolism; N-acetylmuramate degradation. Functionally, specifically catalyzes the cleavage of the D-lactyl ether substituent of MurNAc 6-phosphate, producing GlcNAc 6-phosphate and D-lactate. The protein is N-acetylmuramic acid 6-phosphate etherase of Bacillus cereus (strain G9842).